We begin with the raw amino-acid sequence, 380 residues long: Probable tRNA sulfurtransferase (380 aa).

In terms of domain architecture, THUMP spans 58–162 (EEVIERLKKV…MAFVYAGVIE (105 aa)). ATP-binding positions include 178–179 (LL), 203–204 (YF), R260, G282, and Q291.

The protein belongs to the ThiI family.

It is found in the cytoplasm. It catalyses the reaction [ThiI sulfur-carrier protein]-S-sulfanyl-L-cysteine + a uridine in tRNA + 2 reduced [2Fe-2S]-[ferredoxin] + ATP + H(+) = [ThiI sulfur-carrier protein]-L-cysteine + a 4-thiouridine in tRNA + 2 oxidized [2Fe-2S]-[ferredoxin] + AMP + diphosphate. It carries out the reaction [ThiS sulfur-carrier protein]-C-terminal Gly-Gly-AMP + S-sulfanyl-L-cysteinyl-[cysteine desulfurase] + AH2 = [ThiS sulfur-carrier protein]-C-terminal-Gly-aminoethanethioate + L-cysteinyl-[cysteine desulfurase] + A + AMP + 2 H(+). The protein operates within cofactor biosynthesis; thiamine diphosphate biosynthesis. Catalyzes the ATP-dependent transfer of a sulfur to tRNA to produce 4-thiouridine in position 8 of tRNAs, which functions as a near-UV photosensor. Also catalyzes the transfer of sulfur to the sulfur carrier protein ThiS, forming ThiS-thiocarboxylate. This is a step in the synthesis of thiazole, in the thiamine biosynthesis pathway. The sulfur is donated as persulfide by IscS. The sequence is that of Probable tRNA sulfurtransferase from Thermoanaerobacter pseudethanolicus (strain ATCC 33223 / 39E) (Clostridium thermohydrosulfuricum).